Consider the following 486-residue polypeptide: Solute carrier family 2, facilitated glucose transporter member 5 (486 aa).

Met1 is modified (N-acetylmethionine). Over Met1–Ala19 the chain is Cytoplasmic. A helical membrane pass occupies residues Leu20–Cys40. Tyr33 is a binding site for D-fructose. Topologically, residues Asn41–Thr69 are extracellular. The N-linked (GlcNAc...) asparagine glycan is linked to Asn52. Residues Leu70 to Pro92 traverse the membrane as a helical segment. Over Leu93–Arg99 the chain is Cytoplasmic. A helical transmembrane segment spans residues Lys100 to Ser120. The Extracellular segment spans residues Lys121–Glu127. A helical membrane pass occupies residues Leu128–Tyr150. The Cytoplasmic portion of the chain corresponds to Leu151–Ala162. A helical membrane pass occupies residues Leu163–Leu183. Gln168 contributes to the D-fructose binding site. Topologically, residues Arg184–Trp192 are extracellular. Residues Pro193–Phe211 form a helical membrane-spanning segment. Residues Pro212 to Gln274 are Cytoplasmic-facing. A helical transmembrane segment spans residues Leu275 to Tyr294. D-fructose is bound by residues Gln284 and Ile292–Tyr294. At Tyr295 to Asp306 the chain is on the extracellular side. A helical membrane pass occupies residues Thr307–Phe327. Over Val328–Arg334 the chain is Cytoplasmic. Residues Leu335–Leu355 traverse the membrane as a helical segment. At Ala356 to Trp363 the chain is on the extracellular side. The helical transmembrane segment at Met364–Ile385 threads the bilayer. His379 lines the D-fructose pocket. Residues Arg386–Trp402 lie on the Cytoplasmic side of the membrane. The chain crosses the membrane as a helical span at residues Trp403–Ile421. D-fructose is bound at residue His407–Trp408. At Gln422 to Leu426 the chain is on the extracellular side. The chain crosses the membrane as a helical span at residues Tyr427–Val447. Residues Pro448–Glu486 are Cytoplasmic-facing.

It belongs to the major facilitator superfamily. Sugar transporter (TC 2.A.1.1) family. Glucose transporter subfamily. Detected in jejunum. Detected at the intestinal brush-border membrane (at protein level). Detected in duodenum, jejunum and kidney.

Its subcellular location is the apical cell membrane. The protein localises to the cell membrane. It localises to the sarcolemma. It catalyses the reaction D-fructose(out) = D-fructose(in). Functions as a fructose transporter that has only low activity with other monosaccharides. Can mediate the uptake of deoxyglucose, but with low efficiency. Essential for fructose uptake in the small intestine. Plays a role in the regulation of salt uptake and blood pressure in response to dietary fructose. Required for the development of high blood pressure in response to high dietary fructose intake. The sequence is that of Solute carrier family 2, facilitated glucose transporter member 5 from Oryctolagus cuniculus (Rabbit).